The following is a 436-amino-acid chain: GTPase Der (436 aa).

EngA-type G domains lie at 4 to 167 (PVVA…PKEE) and 176 to 351 (VKFS…DNHS). GTP contacts are provided by residues 10–17 (GRPNVGKS), 57–61 (DTGGI), 119–122 (NKVD), 182–189 (GRPNVGKS), 229–233 (DTAGM), and 294–297 (NKWD). The region spanning 352–436 (LRVQSSMLND…PIRVIARKRK (85 aa)) is the KH-like domain.

The protein belongs to the TRAFAC class TrmE-Era-EngA-EngB-Septin-like GTPase superfamily. EngA (Der) GTPase family. Associates with the 50S ribosomal subunit.

In terms of biological role, GTPase that plays an essential role in the late steps of ribosome biogenesis. The chain is GTPase Der from Listeria innocua serovar 6a (strain ATCC BAA-680 / CLIP 11262).